The following is a 232-amino-acid chain: Ribonuclease 3 (232 aa).

Positions Ala7 to Gly136 constitute an RNase III domain. Position 49 (Glu49) interacts with Mg(2+). Asp53 is a catalytic residue. Mg(2+) is bound by residues Asn122 and Glu125. The active site involves Glu125. In terms of domain architecture, DRBM spans Asp163–Glu232.

It belongs to the ribonuclease III family. As to quaternary structure, homodimer. Requires Mg(2+) as cofactor.

It localises to the cytoplasm. It catalyses the reaction Endonucleolytic cleavage to 5'-phosphomonoester.. Functionally, digests double-stranded RNA. Involved in the processing of primary rRNA transcript to yield the immediate precursors to the large and small rRNAs (23S and 16S). Processes some mRNAs, and tRNAs when they are encoded in the rRNA operon. Processes pre-crRNA and tracrRNA of type II CRISPR loci if present in the organism. In Syntrophotalea carbinolica (strain DSM 2380 / NBRC 103641 / GraBd1) (Pelobacter carbinolicus), this protein is Ribonuclease 3.